Here is a 388-residue protein sequence, read N- to C-terminus: MGNISSSGGEGRRRRRRNHTAAPPPPPPPPSSSLPPPPLPTEIQANPIVFAAVTPYPNPNPNPVYQYPASYYHHPPPGAMPLPPYDHHLQHHPPHPYHNHSWAPVAMARYPYAGHMMAQPTPYVEHQKAVTIRNDVNLKKESLRLEPDPDNPGRFLVSFTFDATVSGRISVIFFAKESEDCKLTATKEDILPPITLDFEKGLGQKFKQSSGSGIDFSVFEDVELFKAAADTEIYPLAVKAEAAPSGGENEEEERSGSKNAQITQAVYEKDKGEIKIRVVKQILWVNGTRYELQEIYGIGNTVEGDDDSADDANDPGKECVICLSEPRDTTVLPCRHMCMCSGCAKVLRFQTNRCPICRQPVERLLEIKVHGNNGSGNNTGQGETVEQE.

The segment at 1–43 (MGNISSSGGEGRRRRRRNHTAAPPPPPPPPSSSLPPPPLPTEI) is disordered. Residue G2 is the site of N-myristoyl glycine attachment. Pro residues predominate over residues 22-40 (APPPPPPPPSSSLPPPPLP). Residues 159–281 (FTFDATVSGR…GEIKIRVVKQ (123 aa)) are DAR2 domain. The RING-type; atypical zinc finger occupies 319–358 (CVICLSEPRDTTVLPCRHMCMCSGCAKVLRFQTNRCPICR). The interval 368–388 (KVHGNNGSGNNTGQGETVEQE) is disordered.

The protein belongs to the RING-type zinc finger family. LOG2 subfamily. Interacts with GDU1. Post-translationally, myristoylated (in vitro). Expressed in the vascular tissues in both phloem and xylem parenchyma cells.

It localises to the cell membrane. The catalysed reaction is S-ubiquitinyl-[E2 ubiquitin-conjugating enzyme]-L-cysteine + [acceptor protein]-L-lysine = [E2 ubiquitin-conjugating enzyme]-L-cysteine + N(6)-ubiquitinyl-[acceptor protein]-L-lysine.. It participates in protein modification; protein ubiquitination. Its function is as follows. Acts as an E3 ubiquitin-protein ligase, or as part of E3 complex, which accepts ubiquitin from specific E2 ubiquitin-conjugating enzymes and then transfers it to substrates (in vitro). Required for GLUTAMINE DUMPER 1(GDU1)-induced amino acid secretion and for amino acid homeostasis. Ubiquitinates GDU1 (in vitro). The sequence is that of Probable E3 ubiquitin-protein ligase LOG2 (LOG2) from Arabidopsis thaliana (Mouse-ear cress).